We begin with the raw amino-acid sequence, 180 residues long: Endoribonuclease YbeY (180 aa).

Zn(2+)-binding residues include His-118, His-122, and His-128.

This sequence belongs to the endoribonuclease YbeY family. Requires Zn(2+) as cofactor.

It is found in the cytoplasm. Single strand-specific metallo-endoribonuclease involved in late-stage 70S ribosome quality control and in maturation of the 3' terminus of the 16S rRNA. The sequence is that of Endoribonuclease YbeY from Rhodococcus erythropolis (strain PR4 / NBRC 100887).